We begin with the raw amino-acid sequence, 308 residues long: 15-cis-phytoene synthase (308 aa).

It belongs to the phytoene/squalene synthase family. It depends on ATP as a cofactor. Mn(2+) serves as cofactor. The cofactor is Mg(2+).

The enzyme catalyses 2 (2E,6E,10E)-geranylgeranyl diphosphate = 15-cis-phytoene + 2 diphosphate. Its pathway is carotenoid biosynthesis; phytoene biosynthesis. Functionally, involved in the biosynthesis of carotenoids. Catalyzes the condensation of two molecules of geranylgeranyl diphosphate (GGPP) to give prephytoene diphosphate (PPPP) and the subsequent rearrangement of the cyclopropylcarbinyl intermediate to yield 15-cis-phytoene. The protein is 15-cis-phytoene synthase (crtB) of Synechococcus elongatus (strain ATCC 33912 / PCC 7942 / FACHB-805) (Anacystis nidulans R2).